We begin with the raw amino-acid sequence, 108 residues long: Peptidyl-prolyl cis-trans isomerase FKBP1A (108 aa).

Phosphoserine is present on Ser10. The 89-residue stretch at 20 to 108 (GQTCVVHYTG…VFDVELLKLE (89 aa)) folds into the PPIase FKBP-type domain. Residue Lys53 is modified to N6-acetyllysine; alternate. Lys53 is modified (N6-succinyllysine; alternate).

Belongs to the FKBP-type PPIase family. FKBP1 subfamily. Interacts with TGFBR1; prevents TGFBR1 phosphorylation by TGFBR2 and stabilizes it in the inactive conformation. Interacts with ACVR1B and SMAD7. Identified in a complex composed of RYR1, PDE4D, PKA, FKBP1A and protein phosphatase 1 (PP1). Interacts directly with RYR2. Interacts directly with RYR3. Interacts directly with RYR1. Interacts with GLMN; rapamycin and FK506 abolish the interaction with GLMN in a dose dependent manner. Ubiquitous.

It is found in the cytoplasm. The protein resides in the cytosol. It localises to the sarcoplasmic reticulum membrane. The catalysed reaction is [protein]-peptidylproline (omega=180) = [protein]-peptidylproline (omega=0). With respect to regulation, inhibited by both FK506 and rapamycin. Keeps in an inactive conformation TGFBR1, the TGF-beta type I serine/threonine kinase receptor, preventing TGF-beta receptor activation in absence of ligand. Recruits SMAD7 to ACVR1B which prevents the association of SMAD2 and SMAD3 with the activin receptor complex, thereby blocking the activin signal. May modulate the RYR1 calcium channel activity. PPIases accelerate the folding of proteins. It catalyzes the cis-trans isomerization of proline imidic peptide bonds in oligopeptides. In Rattus norvegicus (Rat), this protein is Peptidyl-prolyl cis-trans isomerase FKBP1A (Fkbp1a).